A 950-amino-acid chain; its full sequence is Glycine dehydrogenase (decarboxylating) 1 (950 aa).

Lys-704 bears the N6-(pyridoxal phosphate)lysine mark.

Belongs to the GcvP family. The glycine cleavage system is composed of four proteins: P, T, L and H. It depends on pyridoxal 5'-phosphate as a cofactor.

It catalyses the reaction N(6)-[(R)-lipoyl]-L-lysyl-[glycine-cleavage complex H protein] + glycine + H(+) = N(6)-[(R)-S(8)-aminomethyldihydrolipoyl]-L-lysyl-[glycine-cleavage complex H protein] + CO2. Its function is as follows. The glycine cleavage system catalyzes the degradation of glycine. The P protein binds the alpha-amino group of glycine through its pyridoxal phosphate cofactor; CO(2) is released and the remaining methylamine moiety is then transferred to the lipoamide cofactor of the H protein. This is Glycine dehydrogenase (decarboxylating) 1 from Pseudomonas fluorescens (strain Pf0-1).